Here is a 300-residue protein sequence, read N- to C-terminus: Epimerase family protein SAR0825 (300 aa).

The protein belongs to the NAD(P)-dependent epimerase/dehydratase family. SDR39U1 subfamily.

The protein is Epimerase family protein SAR0825 of Staphylococcus aureus (strain MRSA252).